A 286-amino-acid chain; its full sequence is Phycobilisome 31.8 kDa linker polypeptide, phycoerythrin-associated, rod (286 aa).

The PBS-linker domain maps to 2 to 179 (PFGPASRLGV…LVRGASSSSL (178 aa)). The CpcD-like domain maps to 231 to 286 (GKVYRIEVTGYRAKTFNNISKFRRSNQVFLVPYEKLSQEYQRIHQQGGVIASITPV).

The protein belongs to the phycobilisome linker protein family. The phycobilisome is a hemidiscoidal structure that is composed of two distinct substructures: a core complex and six rods radiating from the core.

It is found in the cellular thylakoid membrane. Its function is as follows. Rod linker protein, associated with phycoerythrocyanin. Linker polypeptides determine the state of aggregation and the location of the disk-shaped phycobiliprotein units within the phycobilisome and modulate their spectroscopic properties in order to mediate a directed and optimal energy transfer. The polypeptide is Phycobilisome 31.8 kDa linker polypeptide, phycoerythrin-associated, rod (cpeC) (Microchaete diplosiphon (Fremyella diplosiphon)).